Consider the following 795-residue polypeptide: Protocadherin beta-12 (795 aa).

The first 26 residues, 1-26, serve as a signal peptide directing secretion; it reads MENGGAGTLQIRQVLLFFVLLGMSQA. Residues 27 to 690 lie on the Extracellular side of the membrane; the sequence is GSETGNFLVM…AQADSLTVYL (664 aa). Cadherin domains are found at residues 35–133, 138–242, 247–347, 352–451, and 456–561; these read VMEE…SPVF, MLLE…SPEF, YEVK…APEI, ITSP…APAF, and YALF…SPFV. Asn-418, Asn-436, Asn-487, and Asn-567 each carry an N-linked (GlcNAc...) asparagine glycan. In terms of domain architecture, Cadherin 6 spans 568-671; the sequence is GSAPCTELVP…LVDGFSQPYL (104 aa). The chain crosses the membrane as a helical span at residues 691 to 711; the sequence is VVALASVSSLFLFSVLLFVAV. Topologically, residues 712-795 are cytoplasmic; sequence RLCRRSRAAP…NPPFQNNLGF (84 aa).

The protein localises to the cell membrane. In terms of biological role, potential calcium-dependent cell-adhesion protein. May be involved in the establishment and maintenance of specific neuronal connections in the brain. The polypeptide is Protocadherin beta-12 (PCDHB12) (Homo sapiens (Human)).